A 686-amino-acid polypeptide reads, in one-letter code: Pentatricopeptide repeat-containing protein At4g08210 (686 aa).

PPR repeat units lie at residues 4–38 (DLKLIAAGLRHCGKVQAFKRGESIQAHVIKQGISQ), 39–69 (NVFIANNVISMYVDFRLLSDAHKVFDEMSER), 70–104 (NIVTWTTMVSGYTSDGKPNKAIELYRRMLDSEEEA), 106–140 (NEFMYSAVLKACGLVGDIQLGILVYERIGKENLRG), 141–171 (DVVLMNSVVDMYVKNGRLIEANSSFKEILRP), 172–206 (SSTSWNTLISGYCKAGLMDEAVTLFHRMPQPNVVS), 207–236 (WNCLISGFVDKGSPRALEFLVRMQREGLVL), 237–271 (DGFALPCGLKACSFGGLLTMGKQLHCCVVKSGLES), 272–302 (SPFAISALIDMYSNCGSLIYAADVFHQEKLA), 306–340 (SVAVWNSMLSGFLINEENEAALWLLLQIYQSDLCF), 341–375 (DSYTLSGALKICINYVNLRLGLQVHSLVVVSGYEL), 376–406 (DYIVGSILVDLHANVGNIQDAHKLFHRLPNK), 407–441 (DIIAFSGLIRGCVKSGFNSLAFYLFRELIKLGLDA), 442–476 (DQFIVSNILKVCSSLASLGWGKQIHGLCIKKGYES), 477–507 (EPVTATALVDMYVKCGEIDNGVVLFDGMLER), 508–542 (DVVSWTGIIVGFGQNGRVEEAFRYFHKMINIGIEP), 543–573 (NKVTFLGLLSACRHSGLLEEARSTLETMKSE), and 579–609 (YLEHYYCVVDLLGQAGLFQEANELINKMPLE). Residues 614–686 (IWTSLLTACG…AKESGMSWII (73 aa)) are type E motif; degenerate.

It belongs to the PPR family. PCMP-E subfamily.

This Arabidopsis thaliana (Mouse-ear cress) protein is Pentatricopeptide repeat-containing protein At4g08210 (PCMP-E100).